The following is a 126-amino-acid chain: UPF0102 protein BCAN_A0183 (126 aa).

The protein belongs to the UPF0102 family.

This chain is UPF0102 protein BCAN_A0183, found in Brucella canis (strain ATCC 23365 / NCTC 10854 / RM-666).